Reading from the N-terminus, the 138-residue chain is Transcriptional activator protein Pur-alpha (138 aa).

Ser-70 carries the phosphoserine modification.

The protein belongs to the PUR DNA-binding protein family. In terms of assembly, homodimer, heterodimer with PURB and heterotrimer with PURB and YBX1/Y-box protein 1. Interacts with FMR1; this interaction occurs in association with polyribosome.

It is found in the nucleus. In terms of biological role, this is a probable transcription activator that specifically binds the purine-rich single strand of the PUR element located upstream of the c-Myc gene. May play a role in the initiation of DNA replication and in recombination. The polypeptide is Transcriptional activator protein Pur-alpha (Rattus norvegicus (Rat)).